The following is a 294-amino-acid chain: Glycine--tRNA ligase alpha subunit (294 aa).

The protein belongs to the class-II aminoacyl-tRNA synthetase family. In terms of assembly, tetramer of two alpha and two beta subunits.

It is found in the cytoplasm. The catalysed reaction is tRNA(Gly) + glycine + ATP = glycyl-tRNA(Gly) + AMP + diphosphate. The protein is Glycine--tRNA ligase alpha subunit of Nostoc sp. (strain PCC 7120 / SAG 25.82 / UTEX 2576).